The sequence spans 558 residues: GPI mannosyltransferase 3 (558 aa).

4 helical membrane passes run 53 to 73, 81 to 101, 164 to 184, and 190 to 210; these read GLRSVLFPAVVALPFYLLKLL, VWFAPRVLQALVLTLIDVSVF, AYCGVRLYGNVIEALLVLLTL, and VPFLLLTGLASAIRVTSAVVL. The N-linked (GlcNAc...) asparagine glycan is linked to Asn220. The chain crosses the membrane as a helical span at residues 234–254; the sequence is IVLTGLIVLVAVLGGVMVLDY. A glycan (N-linked (GlcNAc...) asparagine) is linked at Asn275. Helical transmembrane passes span 292–312, 323–343, 348–368, and 372–392; these read VLVGIVGPHVLFTIAAPLVLW, PVLGMLGIGAWTLGFYSLIDH, FVFVVIPLSLITAAFVLVRWS, and AVVVKMNRLFVLFNIVMIYLM.

Belongs to the glycosyltransferase 22 family. PIGB subfamily.

It is found in the endoplasmic reticulum membrane. The protein operates within glycolipid biosynthesis; glycosylphosphatidylinositol-anchor biosynthesis. In terms of biological role, mannosyltransferase involved in glycosylphosphatidylinositol-anchor biosynthesis. Transfers the third alpha-1,2-mannose to Man2-GlcN-acyl-PI during GPI precursor assembly. The sequence is that of GPI mannosyltransferase 3 (GPI10) from Trypanosoma brucei brucei.